The following is a 285-amino-acid chain: Nucleotide-binding protein CD630_34000 (285 aa).

8-15 (GLSGSGKS) is an ATP binding site. 59 to 62 (DIRG) serves as a coordination point for GTP.

Belongs to the RapZ-like family.

Its function is as follows. Displays ATPase and GTPase activities. The protein is Nucleotide-binding protein CD630_34000 of Clostridioides difficile (strain 630) (Peptoclostridium difficile).